The following is a 347-amino-acid chain: Putative phosphoesterase 078R (347 aa).

The a divalent metal cation site is built by Asp-52, Asn-87, and His-211.

It belongs to the metallophosphoesterase superfamily. IIV-6 244L family.

This is Putative phosphoesterase 078R from Invertebrate iridescent virus 3 (IIV-3).